The sequence spans 178 residues: Arginine repressor (178 aa).

The segment at 1 to 21 (MSQAQENEHAGPAVPQTRTAR) is disordered.

Belongs to the ArgR family.

It is found in the cytoplasm. It functions in the pathway amino-acid biosynthesis; L-arginine biosynthesis [regulation]. In terms of biological role, regulates arginine biosynthesis genes. The chain is Arginine repressor from Streptomyces avermitilis (strain ATCC 31267 / DSM 46492 / JCM 5070 / NBRC 14893 / NCIMB 12804 / NRRL 8165 / MA-4680).